The chain runs to 140 residues: Small ribosomal subunit protein bS6 (140 aa).

Positions 96–140 are disordered; the sequence is VTGQSEMLKAEENRSERRERRDRPEHEGADSADSDDSDNSDNADE. A compositionally biased stretch (basic and acidic residues) spans 103-124; the sequence is LKAEENRSERRERRDRPEHEGA. Residues 125–140 show a composition bias toward acidic residues; the sequence is DSADSDDSDNSDNADE.

The protein belongs to the bacterial ribosomal protein bS6 family.

In terms of biological role, binds together with bS18 to 16S ribosomal RNA. The chain is Small ribosomal subunit protein bS6 from Pseudomonas fluorescens (strain SBW25).